The following is a 62-amino-acid chain: Large ribosomal subunit protein bL32m (62 aa).

This sequence belongs to the bacterial ribosomal protein bL32 family.

The protein resides in the mitochondrion. This Reclinomonas americana protein is Large ribosomal subunit protein bL32m (RPL32).